The following is a 441-amino-acid chain: 5-methylthioadenosine/S-adenosylhomocysteine deaminase (441 aa).

Histidine 70 and histidine 72 together coordinate Zn(2+). Residues glutamate 99 and histidine 191 each contribute to the substrate site. A Zn(2+)-binding site is contributed by histidine 218. Residues glutamate 221 and aspartate 306 each contribute to the substrate site. Zn(2+) is bound at residue aspartate 306.

This sequence belongs to the metallo-dependent hydrolases superfamily. MTA/SAH deaminase family. Zn(2+) is required as a cofactor.

The enzyme catalyses S-adenosyl-L-homocysteine + H2O + H(+) = S-inosyl-L-homocysteine + NH4(+). It carries out the reaction S-methyl-5'-thioadenosine + H2O + H(+) = S-methyl-5'-thioinosine + NH4(+). Catalyzes the deamination of 5-methylthioadenosine and S-adenosyl-L-homocysteine into 5-methylthioinosine and S-inosyl-L-homocysteine, respectively. Is also able to deaminate adenosine. The chain is 5-methylthioadenosine/S-adenosylhomocysteine deaminase from Lawsonia intracellularis (strain PHE/MN1-00).